A 420-amino-acid polypeptide reads, in one-letter code: Synaptosomal-associated protein 47 (420 aa).

2 t-SNARE coiled-coil homology domains span residues 110-172 (AEAA…LTEL) and 357-419 (TSEP…MKKL). Residues 338-357 (ATHCEPSSGSQEGRPLQLQT) are disordered. Residues 342–357 (EPSSGSQEGRPLQLQT) are compositionally biased toward polar residues.

This sequence belongs to the SVAP1 family. In terms of assembly, forms a complex containing SNAP47, VAMP2 and STX1A. Associates with the BLOC-1 complex. Interacts with BLOC1S6.

It localises to the endomembrane system. The protein resides in the cytoplasm. The protein localises to the perinuclear region. Its function is as follows. May play a role in intracellular membrane fusion. The chain is Synaptosomal-associated protein 47 (SNAP47) from Bos taurus (Bovine).